Here is a 436-residue protein sequence, read N- to C-terminus: Glutamyl-tRNA reductase (436 aa).

Residues 49 to 52 (TCNR), Ser-109, 114 to 116 (EGQ), and Gln-120 contribute to the substrate site. The Nucleophile role is filled by Cys-50. Residue 198-203 (GAGRMS) coordinates NADP(+).

The protein belongs to the glutamyl-tRNA reductase family. Homodimer.

It catalyses the reaction (S)-4-amino-5-oxopentanoate + tRNA(Glu) + NADP(+) = L-glutamyl-tRNA(Glu) + NADPH + H(+). It functions in the pathway porphyrin-containing compound metabolism; protoporphyrin-IX biosynthesis; 5-aminolevulinate from L-glutamyl-tRNA(Glu): step 1/2. It participates in porphyrin-containing compound metabolism; chlorophyll biosynthesis. Functionally, catalyzes the NADPH-dependent reduction of glutamyl-tRNA(Glu) to glutamate 1-semialdehyde (GSA). This is Glutamyl-tRNA reductase from Prochlorococcus marinus (strain AS9601).